We begin with the raw amino-acid sequence, 272 residues long: 3-hydroxyanthranilate 3,4-dioxygenase (272 aa).

The tract at residues 1-154 (MMEWIDENSS…SEEHKTGKPS (154 aa)) is domain A (catalytic). An O2-binding site is contributed by Arg38. The Fe cation site is built by His42, Glu48, and His86. Glu48 provides a ligand contact to substrate. Residues Arg90 and Glu100 each contribute to the substrate site. A linker region spans residues 155-169 (KESSCSINVDTETEL). Residues 170–272 (MEPFPLKQWL…SITVDSLANK (103 aa)) form a domain B region.

Belongs to the 3-HAO family. Fe(2+) serves as cofactor.

It localises to the cytoplasm. It carries out the reaction 3-hydroxyanthranilate + O2 = (2Z,4Z)-2-amino-3-carboxymuconate 6-semialdehyde. It participates in cofactor biosynthesis; NAD(+) biosynthesis; quinolinate from L-kynurenine: step 3/3. In terms of biological role, catalyzes the oxidative ring opening of 3-hydroxyanthranilate to 2-amino-3-carboxymuconate semialdehyde, which spontaneously cyclizes to quinolinate. This chain is 3-hydroxyanthranilate 3,4-dioxygenase, found in Nematostella vectensis (Starlet sea anemone).